The sequence spans 811 residues: Phenylalanine--tRNA ligase beta subunit (811 aa).

Residues 39–151 enclose the tRNA-binding domain; that stretch reads RTWAAGVVVG…AGLQAGQPVG (113 aa). The B5 domain maps to 409 to 495; it reads EPEHSITLRL…RLYGYDNFGE (87 aa). 4 residues coordinate Mg(2+): aspartate 473, aspartate 479, glutamate 482, and glutamate 483. The region spanning 717–810 is the FDX-ACB domain; that stretch reads SSFPASDRDL…LVERFRVTLR (94 aa).

It belongs to the phenylalanyl-tRNA synthetase beta subunit family. Type 1 subfamily. As to quaternary structure, tetramer of two alpha and two beta subunits. Requires Mg(2+) as cofactor.

It localises to the cytoplasm. The enzyme catalyses tRNA(Phe) + L-phenylalanine + ATP = L-phenylalanyl-tRNA(Phe) + AMP + diphosphate + H(+). In Synechococcus sp. (strain ATCC 27144 / PCC 6301 / SAUG 1402/1) (Anacystis nidulans), this protein is Phenylalanine--tRNA ligase beta subunit.